Reading from the N-terminus, the 127-residue chain is Modulator protein MzrA (127 aa).

Residues 1 to 11 (MRKPRVTLRHL) are Cytoplasmic-facing. The chain crosses the membrane as a helical span at residues 12-31 (AWSTMLLMVLGTGMLFWSAV). At 32–127 (RQQESTLAIR…RLRDAPHRMG (96 aa)) the chain is on the periplasmic side.

It belongs to the MzrA family. Interacts with EnvZ.

It is found in the cell inner membrane. Functionally, modulates the activity of the EnvZ/OmpR two-component regulatory system, probably by directly modulating EnvZ enzymatic activity and increasing stability of phosphorylated OmpR. This Citrobacter rodentium (strain ICC168) (Citrobacter freundii biotype 4280) protein is Modulator protein MzrA.